The primary structure comprises 162 residues: MPSFDVVSEVDLMEVENAFNQARKEIAQRFDFKGTHTELERDKEQNVLIRAGSEGRAEAALQVLMEKLAKRGVALESLDPQKLEPASGGHVRQLVKLKRGLKIEDARKIVAKVKESGIKVQAAIQGDAVRVTGKKRDDLQAAIHAIRAAAFPIPLQFQNFRD.

The protein belongs to the YajQ family.

Functionally, nucleotide-binding protein. This chain is Nucleotide-binding protein AnaeK_0101, found in Anaeromyxobacter sp. (strain K).